We begin with the raw amino-acid sequence, 106 residues long: UPF0060 membrane protein Smed_0659 (106 aa).

Transmembrane regions (helical) follow at residues 4–24 (FAIY…FWAW), 31–51 (GLWL…LTMV), and 61–81 (AAYG…AEGA).

The protein belongs to the UPF0060 family.

It localises to the cell inner membrane. This Sinorhizobium medicae (strain WSM419) (Ensifer medicae) protein is UPF0060 membrane protein Smed_0659.